The chain runs to 753 residues: MSKNSEFINLSFLLDHEKEMILGVLKRDEYLKKVEDKRIRKLKNELLEAKRRSGKTHQEANRVCVHCQKSLGLIFDRGAPCQACSLRVCSECRVTGLDGSWKCTVCAKVAQLRIISGEWFLEEKAKRFKQVNVLGTDVVRQSILRRSPGSEEIQNQEQAHQGADKSDTLSSVRQKATHDGPKRKGFLLSKFRSATRGEIKTPKAESGRSYSLDLDNQNLQSFKSVSGSDRGSTTSSDLTDQEAGRGAPKGSCSNGGIPVTQRSPAPSARSVTSISSREHGFENSMALATIESISEELTKSHRRNTSGTPSIAVSGTSLSSERSRSELDLSESFAEDLEDTSSIRSRSVPGALDKDLNSLEDTEDGVDLVSSRFSANTHSLASGLSTSSQAGSDRKRSYLHVPDADSDTTSLNSMMSVYSETGDYGNVKVTGEILLHISYCYKTGGLYIFVKNCRNLAIGDEKKQRTDAYVKSYLLPDKTRNNKRKTKIRTGTNPEFNETLKYTISHTQLETRTLQLSVWHYDRFGRNSFLGEVEIAFDSWNFENPCDEWFVLQPKVELAPDISLQYKGELTIVLRYIPPEENLIFPVEQPQGKKIFKKGKKKESPAISGGILEVFIKEAKNLTAVKAGGTSDSFVKGYLLPDDNKATKHKTAVVKKSVNPQWNHVFIFSGLYPQDIQNACLELTIWDKEAFSSNIFLGGVRLNSGSGISHGKAVDWMDSRGEEQRLWQKMADNPGTSVEGVLMLRSSMAKCRL.

In terms of domain architecture, RabBD spans 7–123 (FINLSFLLDH…IISGEWFLEE (117 aa)). The segment at 64–106 (CVHCQKSLGLIFDRGAPCQACSLRVCSECRVTGLDGSWKCTVC) adopts an FYVE-type zinc-finger fold. Disordered stretches follow at residues 145–188 (RRSP…GFLL), 221–283 (SFKS…GFEN), and 298–359 (TKSH…LNSL). Phosphoserine is present on serine 147. Low complexity predominate over residues 224–238 (SVSGSDRGSTTSSDL). Composition is skewed to polar residues over residues 260-275 (TQRS…TSIS) and 305-316 (TSGTPSIAVSGT). C2 domains are found at residues 429 to 550 (VTGE…DEWF) and 590 to 717 (PQGK…VDWM).

In terms of assembly, binds RAB27A that has been activated by GTP-binding.

The protein resides in the membrane. Functionally, may act as Rab effector protein and play a role in vesicle trafficking. Binds phospholipids. This is Synaptotagmin-like protein 5 (Sytl5) from Rattus norvegicus (Rat).